A 298-amino-acid chain; its full sequence is Protein DR_1172 (298 aa).

3 LEA-like repeats span residues 48 to 117 (DAAQ…NVGQ), 128 to 197 (DQAK…DVAQ), and 201 to 270 (QGAQ…AGKQ). The span at 174–193 (VQDVKADASKAADQAKDKAQ) shows a compositional bias: basic and acidic residues. Residues 174-298 (VQDVKADASK…MTGNTNTRKN (125 aa)) form a disordered region. Low complexity predominate over residues 194-208 (DVAQNVKQGAQQAAS). Positions 209 to 233 (DAKDKVQDVKADASRAADQAKDKAQ) are enriched in basic and acidic residues. Low complexity predominate over residues 275 to 298 (GSTTNNAGTAGNTGMTGNTNTRKN).

It belongs to the LEA type 1 family.

The sequence is that of Protein DR_1172 from Deinococcus radiodurans (strain ATCC 13939 / DSM 20539 / JCM 16871 / CCUG 27074 / LMG 4051 / NBRC 15346 / NCIMB 9279 / VKM B-1422 / R1).